The sequence spans 438 residues: Minor capsid protein p49 (438 aa).

The interval 134 to 167 (PQVSGLKDTQKNCLTQPSSLPSLKNPKNSSVPST) is disordered. Over residues 144-167 (KNCLTQPSSLPSLKNPKNSSVPST) the composition is skewed to polar residues.

This sequence belongs to the asfivirus p49 structural protein family.

Its subcellular location is the virion. Together with the penton and the other minor capsid proteins (M1249L, p17), forms a complicated network immediately below the outer capsid shell, stabilizing the whole capsid. Plays an essential role in the formation of infectious virus particles. Especially required for the formation of the capsid vertices. During virion assembly, associates with the membrane and probably mediates the docking of the penton complex to the inner membrane, where it recruits the capsomers to form the penton core. The sequence is that of Minor capsid protein p49 from Ornithodoros (relapsing fever ticks).